Reading from the N-terminus, the 333-residue chain is Adenosine deaminase (333 aa).

Residues histidine 12 and histidine 14 each coordinate Zn(2+). Positions 14, 16, and 170 each coordinate substrate. Histidine 197 serves as a coordination point for Zn(2+). The Proton donor role is filled by glutamate 200. Residue aspartate 278 participates in Zn(2+) binding. Substrate is bound at residue aspartate 279.

It belongs to the metallo-dependent hydrolases superfamily. Adenosine and AMP deaminases family. Adenosine deaminase subfamily. The cofactor is Zn(2+).

It catalyses the reaction adenosine + H2O + H(+) = inosine + NH4(+). The catalysed reaction is 2'-deoxyadenosine + H2O + H(+) = 2'-deoxyinosine + NH4(+). In terms of biological role, catalyzes the hydrolytic deamination of adenosine and 2-deoxyadenosine. The chain is Adenosine deaminase from Escherichia coli O7:K1 (strain IAI39 / ExPEC).